The sequence spans 195 residues: MASKYAVKLQTDFDNPKWIKRHKFMFDYLDINGNGQITLDEIVSKASDDICKNLGATPAQTQRHQDCVEAFFRGCGLEYGKETKFPEFLEGWKNLANADLAKWARNEPTLIREWGDAVFDIFDKDGSGTITLDEWKAYGRISGISPSEEDCEKTFQHCDLDNSGELDVDEMTRQHLGFWYTLDPEADGLYGNGVP.

The propeptide occupies 1–6 (MASKYA). EF-hand domains follow at residues 17–52 (KWIK…DICK), 53–88 (NLGA…FPEF), 110–145 (LIRE…SGIS), and 146–181 (PSEE…FWYT). The Ca(2+) site is built by D30, N32, N34, Q36, and E41. Residues D123, D125, S127, T129, E134, D159, D161, S163, E165, and E170 each coordinate Ca(2+).

It belongs to the aequorin family.

Its function is as follows. Ca(2+)-dependent bioluminescence photoprotein. Displays an emission peak at 495 nm (blue light). Trace amounts of calcium ion trigger the intramolecular oxidation of the chromophore, coelenterazine into coelenteramide and CO(2) with the concomitant emission of light. The chain is Obelin from Obelia geniculata (Knotted thread hydroid).